A 525-amino-acid polypeptide reads, in one-letter code: Light-independent protochlorophyllide reductase subunit B (525 aa).

[4Fe-4S] cluster is bound at residue D36. The active-site Proton donor is the D274. 409–410 (GL) contacts substrate. The interval 433 to 464 (HGGKAVAREESPVAPADLAPAATSDTPAAPSP) is disordered. Residues 444–464 (PVAPADLAPAATSDTPAAPSP) are compositionally biased toward low complexity.

It belongs to the ChlB/BchB/BchZ family. Protochlorophyllide reductase is composed of three subunits; BchL, BchN and BchB. Forms a heterotetramer of two BchB and two BchN subunits. It depends on [4Fe-4S] cluster as a cofactor.

The enzyme catalyses chlorophyllide a + oxidized 2[4Fe-4S]-[ferredoxin] + 2 ADP + 2 phosphate = protochlorophyllide a + reduced 2[4Fe-4S]-[ferredoxin] + 2 ATP + 2 H2O. The protein operates within porphyrin-containing compound metabolism; bacteriochlorophyll biosynthesis (light-independent). Its function is as follows. Component of the dark-operative protochlorophyllide reductase (DPOR) that uses Mg-ATP and reduced ferredoxin to reduce ring D of protochlorophyllide (Pchlide) to form chlorophyllide a (Chlide). This reaction is light-independent. The NB-protein (BchN-BchB) is the catalytic component of the complex. The chain is Light-independent protochlorophyllide reductase subunit B from Rhodobacter capsulatus (strain ATCC BAA-309 / NBRC 16581 / SB1003).